We begin with the raw amino-acid sequence, 133 residues long: Putative elongation factor 1-delta-like protein (133 aa).

Residues 58 to 73 (SLAGSLGPGASSGPSG) show a composition bias toward low complexity. 2 disordered regions span residues 58 to 77 (SLAG…DHSE) and 89 to 133 (NQRD…TSRG). The span at 89 to 102 (NQRDLAERAGEELA) shows a compositional bias: basic and acidic residues.

Belongs to the EF-1-beta/EF-1-delta family.

This is Putative elongation factor 1-delta-like protein (EEF1DP3) from Homo sapiens (Human).